Reading from the N-terminus, the 1748-residue chain is Tight junction protein 1 (1748 aa).

The region spanning 23-110 (TVTLHRAPGF…NAKITIRRKK (88 aa)) is the PDZ 1 domain. A compositionally biased stretch (basic residues) spans 102 to 112 (AKITIRRKKKV). The interval 102–189 (AKITIRRKKK…QPAKPTKVTL (88 aa)) is disordered. The span at 123-136 (PVSDNEEDSYDEEI) shows a compositional bias: acidic residues. At Ser-125 the chain carries Phosphoserine. The residue at position 132 (Tyr-132) is a Phosphotyrosine. A compositionally biased stretch (basic and acidic residues) spans 149–175 (RRSEKIWPRDRSASRERSLSPRSDRRS). Residues Ser-175, Ser-178, and Ser-179 each carry the phosphoserine modification. A Phosphothreonine modification is found at Thr-185. Residues 186–264 (KVTLVKSRKN…KLKMVVQRDE (79 aa)) enclose the PDZ 2 domain. Phosphoserine occurs at positions 212 and 241. Thr-267 is modified (phosphothreonine). Residues Ser-275, Ser-277, Ser-280, Ser-284, Ser-290, Ser-294, Ser-297, Ser-300, Ser-323, Ser-329, Ser-334, Ser-337, and Ser-353 each carry the phosphoserine modification. Residues 295 to 396 (LASDHSGRSH…PVYAQVGQPD (102 aa)) form a disordered region. Positions 299–327 (HSGRSHDRPPRRSRSRSPDQRSEPSDHSR) are enriched in basic and acidic residues. Over residues 329–338 (SPQQPSNGSL) the composition is skewed to polar residues. A Phosphothreonine modification is found at Thr-354. Basic and acidic residues predominate over residues 357 to 377 (KHADDHTPKTVEEVTVERNEK). One can recognise a PDZ 3 domain in the interval 421-502 (SMKLVKFRKG…GEEVTILAQK (82 aa)). Residues 516 to 584 (GDSFYIRTHF…PNKNRAEQLA (69 aa)) enclose the SH3 domain. In terms of domain architecture, Guanylate kinase-like spans 598-779 (RADFWRFRGL…TTTINLNSMN (182 aa)). A phosphoserine mark is found at Ser-617 and Ser-622. The segment at 633 to 876 (YERVVLREAG…GTPPESAITR (244 aa)) is occludin (OCLN)-binding region. Thr-809 bears the Phosphothreonine mark. A phosphoserine mark is found at Ser-810 and Ser-821. At Tyr-822 the chain carries Phosphotyrosine. Phosphoserine occurs at positions 824, 828, and 837. 2 disordered regions span residues 825 to 1081 (APGS…LRYE) and 1095 to 1587 (DDKQ…PEFD). A phosphothreonine mark is found at Thr-846, Thr-848, Thr-854, Thr-861, and Thr-868. Residues 879–892 (EPVREDSSGMHHEN) show a composition bias toward basic and acidic residues. The segment covering 893-906 (QTYPPYSPQAQPQP) has biased composition (low complexity). Ser-912 is subject to Phosphoserine. Polar residues-rich tracts occupy residues 934 to 953 (PETNPASSTSAVNHNVNLTN) and 963 to 979 (PSTSYSPQADSLRTPST). Ser-968 is subject to Phosphoserine. Residues 998–1014 (DPTKVYRKDPYPEEMMR) are compositionally biased toward basic and acidic residues. Residues 1061-1072 (YESSSYTDQFSR) show a composition bias toward polar residues. Residues Ser-1071, Ser-1111, and Ser-1139 each carry the phosphoserine modification. Residues 1110–1125 (HSQDLDSRQHPEESSE) show a composition bias toward basic and acidic residues. 2 positions are modified to phosphotyrosine: Tyr-1140 and Tyr-1165. An actin-binding region (ABR) region spans residues 1151 to 1371 (RASALRHEEQ…FDRRSFENKP (221 aa)). Basic and acidic residues-rich tracts occupy residues 1269-1286 (KMFENKRSASLETKKDVN) and 1336-1347 (PPEDIVRSNHYD). A Phosphotyrosine modification is found at Tyr-1354. Residue Ser-1366 is modified to Phosphoserine. Low complexity predominate over residues 1389-1400 (SQNQSNFSSYSS). Positions 1403–1420 (KPPEADGVDRSFGEKRYE) are enriched in basic and acidic residues. Phosphoserine is present on Ser-1413. Polar residues-rich tracts occupy residues 1459 to 1470 (NSVSLDFQNSLV) and 1512 to 1522 (GTEQTQKTVTP). Positions 1538–1547 (PFERKFESPK) are enriched in basic and acidic residues. Phosphoserine is present on residues Ser-1545 and Ser-1617. One can recognise a ZU5 domain in the interval 1634–1748 (ATARGIFNSN…NCVSVLIDHF (115 aa)).

It belongs to the MAGUK family. Homodimer. Forms heterodimers TJP3. Forms a heterodimer (via PDZ2 domain) with TJP2/ZO2 (via PDZ2 domain). Interacts with OCLN, CALM, claudins, CGN/cingulin, CXADR, GJA12, GJD3 and UBN1. Interacts (via ZU5 domain) with CDC42BPB and MYZAP. Interacts (via PDZ domain) with GJA1. Interacts (via PDZ domains) with ANKRD2. Interacts with POPDC1 (via the C-terminus cytoplasmic tail). Interacts with HSPA4 and KIRREL1. Interacts with DLL1. Interacts with USP53 (via the C-terminal region). Interacts (via ABR region) with F-actin. Interacts with DNMBP (via C-terminal domain); required for the apical cell-cell junction localization of DNMBP. Interacts with SPEF1. Interacts (via N-terminus) with CTNNA1. Interacts with CLDN18. Interacts with CLDN16 (via TRV motif); this is a prerequisite for anchoring of CLDN16 at the tight junction. Interacts with PKP1; the interaction facilitates TJP1/ZO-1 localization to the plasma membrane. Interacts with PATJ (via PDZ1-6 domains); the interaction is required for attachment and extension of TJP1/ZO1 condensates along the apical cell interface. Phosphorylated at tyrosine redidues in response to epidermal growth factor (EGF). This response is dependent on an intact actin microfilament system. Dephosphorylated by PTPRJ. In terms of tissue distribution, the alpha-containing isoform is found in most epithelial cell junctions. The short isoform is found both in endothelial cells and the highly specialized epithelial junctions of renal glomeruli and Sertoli cells of the seminiferous tubules.

It is found in the cell membrane. The protein resides in the cell junction. The protein localises to the tight junction. It localises to the gap junction. Its subcellular location is the cell projection. It is found in the podosome. TJP1, TJP2, and TJP3 are closely related scaffolding proteins that link tight junction (TJ) transmembrane proteins such as claudins, junctional adhesion molecules, and occludin to the actin cytoskeleton. Forms a multistranded TJP1/ZO1 condensate which elongates to form a tight junction belt, the belt is anchored at the apical cell membrane via interaction with PATJ. The tight junction acts to limit movement of substances through the paracellular space and as a boundary between the compositionally distinct apical and basolateral plasma membrane domains of epithelial and endothelial cells. Necessary for lumenogenesis, and particularly efficient epithelial polarization and barrier formation. Plays a role in the regulation of cell migration by targeting CDC42BPB to the leading edge of migrating cells. Plays an important role in podosome formation and associated function, thus regulating cell adhesion and matrix remodeling. With TJP2 and TJP3, participates in the junctional retention and stability of the transcription factor DBPA, but is not involved in its shuttling to the nucleus. May play a role in mediating cell morphology changes during ameloblast differentiation via its role in tight junctions. The protein is Tight junction protein 1 of Homo sapiens (Human).